Consider the following 314-residue polypeptide: 2,3,4,5-tetrahydropyridine-2,6-dicarboxylate N-succinyltransferase (314 aa).

Positions 163 and 180 each coordinate Mg(2+). Glutamate 196 functions as the Acyl-anhydride intermediate in the catalytic mechanism. Residues arginine 198, glycine 213, serine 216, alanine 239, 254–255, glycine 262, lysine 274, and 287–290 each bind succinyl-CoA; these read EA and RRNS.

It belongs to the type 2 tetrahydrodipicolinate N-succinyltransferase family. In terms of assembly, homotrimer.

The protein localises to the cytoplasm. It catalyses the reaction (S)-2,3,4,5-tetrahydrodipicolinate + succinyl-CoA + H2O = (S)-2-succinylamino-6-oxoheptanedioate + CoA. Its pathway is amino-acid biosynthesis; L-lysine biosynthesis via DAP pathway; LL-2,6-diaminopimelate from (S)-tetrahydrodipicolinate (succinylase route): step 1/3. In terms of biological role, catalyzes the conversion of the cyclic tetrahydrodipicolinate (THDP) into the acyclic N-succinyl-L-2-amino-6-oxopimelate using succinyl-CoA. This is 2,3,4,5-tetrahydropyridine-2,6-dicarboxylate N-succinyltransferase from Mycolicibacterium smegmatis (strain ATCC 700084 / mc(2)155) (Mycobacterium smegmatis).